The primary structure comprises 305 residues: Protein EXORDIUM-like 2 (305 aa).

The signal sequence occupies residues 1-23 (MASNYRFAIFLTLFFATAGFSAA). The N-linked (GlcNAc...) asparagine glycan is linked to Asn44.

Belongs to the EXORDIUM family.

The protein localises to the secreted. It localises to the extracellular space. The protein resides in the apoplast. Its function is as follows. May play a role in a brassinosteroid-dependent regulation of growth and development. The sequence is that of Protein EXORDIUM-like 2 (EXL2) from Arabidopsis thaliana (Mouse-ear cress).